Consider the following 129-residue polypeptide: Histone H2A.J (129 aa).

The disordered stretch occupies residues 1–22; sequence MSGRGKQGGKVRAKAKSRSSRA. N6-acetyllysine occurs at positions 6 and 10. Positions 7 to 19 are enriched in basic residues; sequence QGGKVRAKAKSRS. N6-lactoyllysine; alternate is present on lysine 10. The residue at position 105 (glutamine 105) is an N5-methylglutamine. Phosphothreonine; by DCAF1 is present on threonine 121.

This sequence belongs to the histone H2A family. As to quaternary structure, the nucleosome is a histone octamer containing two molecules each of H2A, H2B, H3 and H4 assembled in one H3-H4 heterotetramer and two H2A-H2B heterodimers. The octamer wraps approximately 147 bp of DNA. In terms of processing, monoubiquitination of Lys-120 (H2AXK119ub) gives a specific tag for epigenetic transcriptional repression. Following DNA double-strand breaks (DSBs), it is ubiquitinated through 'Lys-63' linkage of ubiquitin moieties. Glutamine methylation at Gln-105 (H2AQ104me) by FBL is specifically dedicated to polymerase I. It is present at 35S ribosomal DNA locus and impairs binding of the FACT complex. Post-translationally, phosphorylation on Ser-2 (H2AS1ph) is enhanced during mitosis. Phosphorylation on Ser-2 by RPS6KA5/MSK1 directly represses transcription. Acetylation of H3 inhibits Ser-2 phosphorylation by RPS6KA5/MSK1. Phosphorylation at Thr-121 (H2AT120ph) by DCAF1 is present in the regulatory region of many tumor suppresor genes and down-regulates their transcription.

The protein resides in the nucleus. It is found in the chromosome. In terms of biological role, core component of nucleosome. Nucleosomes wrap and compact DNA into chromatin, limiting DNA accessibility to the cellular machineries which require DNA as a template. Histones thereby play a central role in transcription regulation, DNA repair, DNA replication and chromosomal stability. DNA accessibility is regulated via a complex set of post-translational modifications of histones, also called histone code, and nucleosome remodeling. The chain is Histone H2A.J from Mus musculus (Mouse).